Here is a 304-residue protein sequence, read N- to C-terminus: MSWIERIKSNITPTRKASIPEGVWTKCDSCGQVLYRAELERNLEVCPKCDHHMRMTARNRLHSLLDEGSLVEMGSELEPKDVLKFRDSKKYKDRLASAQKETGEKDALVVMKGTLYGMPVVAAAFEFAFMGGSMGSVVGARFVRAVEQALEDNCPLICFSASGGARMQEALMSLMQMAKTSAALAKMQERGLPYISVLTDPTMGGVSASFAMLGDLNIAEPKALIGFAGPRVIEQTVREKLPLGFQRSEFLIEKGAIDMIVRRPEMRLKLASILAKLMNLPAPNPEAPREGVVVPPVPDQEPEA.

Positions 23–292 (VWTKCDSCGQ…PNPEAPREGV (270 aa)) constitute a CoA carboxyltransferase N-terminal domain. Zn(2+) is bound by residues Cys27, Cys30, Cys46, and Cys49. The C4-type zinc finger occupies 27–49 (CDSCGQVLYRAELERNLEVCPKC). Residues 284-304 (NPEAPREGVVVPPVPDQEPEA) are disordered. Residues 295 to 304 (PPVPDQEPEA) show a composition bias toward pro residues.

The protein belongs to the AccD/PCCB family. As to quaternary structure, acetyl-CoA carboxylase is a heterohexamer composed of biotin carboxyl carrier protein (AccB), biotin carboxylase (AccC) and two subunits each of ACCase subunit alpha (AccA) and ACCase subunit beta (AccD). Requires Zn(2+) as cofactor.

It is found in the cytoplasm. The enzyme catalyses N(6)-carboxybiotinyl-L-lysyl-[protein] + acetyl-CoA = N(6)-biotinyl-L-lysyl-[protein] + malonyl-CoA. The protein operates within lipid metabolism; malonyl-CoA biosynthesis; malonyl-CoA from acetyl-CoA: step 1/1. In terms of biological role, component of the acetyl coenzyme A carboxylase (ACC) complex. Biotin carboxylase (BC) catalyzes the carboxylation of biotin on its carrier protein (BCCP) and then the CO(2) group is transferred by the transcarboxylase to acetyl-CoA to form malonyl-CoA. In Shigella boydii serotype 4 (strain Sb227), this protein is Acetyl-coenzyme A carboxylase carboxyl transferase subunit beta.